We begin with the raw amino-acid sequence, 567 residues long: TGF-beta receptor type-2 (567 aa).

The N-terminal stretch at 1–23 is a signal peptide; sequence MGRGLLRGLWPLHIVLWTRIAST. Residues 24-166 lie on the Extracellular side of the membrane; that stretch reads IPPHVPKSVN…SPDLLLVIIQ (143 aa). 6 disulfide bridges follow: cysteine 51–cysteine 84, cysteine 54–cysteine 71, cysteine 61–cysteine 67, cysteine 77–cysteine 101, cysteine 121–cysteine 136, and cysteine 138–cysteine 143. N-linked (GlcNAc...) asparagine glycosylation is found at asparagine 70 and asparagine 94. The chain crosses the membrane as a helical span at residues 167–187; it reads VTGVSLLPPLGIAIAVIIIFY. Topologically, residues 188 to 567 are cytoplasmic; sequence CYRVHRQQKL…PEDGSLNTTK (380 aa). In terms of domain architecture, Protein kinase spans 244–546; the sequence is IELDTLVGKG…RFSELEHPER (303 aa). Residues 250-258 and lysine 277 each bind ATP; that span reads VGKGRFAEV. The Proton acceptor role is filled by aspartate 379. Residues serine 409, serine 548, and serine 553 each carry the phosphoserine modification. Residues 545 to 567 are disordered; sequence ERLSGRSCSQEKIPEDGSLNTTK.

The protein belongs to the protein kinase superfamily. TKL Ser/Thr protein kinase family. TGFB receptor subfamily. Homodimer. Heterohexamer; TGFB1, TGFB2 and TGFB3 homodimeric ligands assemble a functional receptor composed of two TGFBR1 and TGFBR2 heterodimers to form a ligand-receptor heterohexamer. The respective affinity of TGFRB1 and TGFRB2 for the ligands may modulate the kinetics of assembly of the receptor and may explain the different biological activities of TGFB1, TGFB2 and TGFB3. Component of a complex composed of TSC22D1 (via N-terminus), TGFBR1 and TGFBR2; the interaction between TSC22D1 and TGFBR1 is inhibited by SMAD7 and promoted by TGFB1. Interacts with DAXX. Interacts with DYNLT4. Interacts with ZFYVE9; ZFYVE9 recruits SMAD2 and SMAD3 to the TGF-beta receptor. Interacts with and is activated by SCUBE3; this interaction does not affect TGFB1-binding to TGFBR2. Interacts with VPS39; this interaction is independent of the receptor kinase activity and of the presence of TGF-beta. Interacts with CLU. Mg(2+) serves as cofactor. The cofactor is Mn(2+). Post-translationally, phosphorylated on a Ser/Thr residue in the cytoplasmic domain. As to expression, widely expressed in adult. Expressed primarily in mesenchyme and epidermis of the midgestational fetus.

It localises to the cell membrane. It is found in the membrane raft. The enzyme catalyses L-threonyl-[receptor-protein] + ATP = O-phospho-L-threonyl-[receptor-protein] + ADP + H(+). It carries out the reaction L-seryl-[receptor-protein] + ATP = O-phospho-L-seryl-[receptor-protein] + ADP + H(+). Transmembrane serine/threonine kinase forming with the TGF-beta type I serine/threonine kinase receptor, TGFBR1, the non-promiscuous receptor for the TGF-beta cytokines TGFB1, TGFB2 and TGFB3. Transduces the TGFB1, TGFB2 and TGFB3 signal from the cell surface to the cytoplasm and is thus regulating a plethora of physiological and pathological processes including cell cycle arrest in epithelial and hematopoietic cells, control of mesenchymal cell proliferation and differentiation, wound healing, extracellular matrix production, immunosuppression and carcinogenesis. The formation of the receptor complex composed of 2 TGFBR1 and 2 TGFBR2 molecules symmetrically bound to the cytokine dimer results in the phosphorylation and the activation of TGFRB1 by the constitutively active TGFBR2. Activated TGFBR1 phosphorylates SMAD2 which dissociates from the receptor and interacts with SMAD4. The SMAD2-SMAD4 complex is subsequently translocated to the nucleus where it modulates the transcription of the TGF-beta-regulated genes. This constitutes the canonical SMAD-dependent TGF-beta signaling cascade. Also involved in non-canonical, SMAD-independent TGF-beta signaling pathways. In terms of biological role, has transforming growth factor beta-activated receptor activity. This Mus musculus (Mouse) protein is TGF-beta receptor type-2 (Tgfbr2).